Here is a 409-residue protein sequence, read N- to C-terminus: LL-diaminopimelate aminotransferase (409 aa).

Substrate-binding residues include tyrosine 15 and glycine 42. Pyridoxal 5'-phosphate is bound by residues tyrosine 72, 108–109 (AK), tyrosine 132, asparagine 186, tyrosine 217, and 245–247 (SFS). Residues lysine 109, tyrosine 132, and asparagine 186 each contribute to the substrate site. The residue at position 248 (lysine 248) is an N6-(pyridoxal phosphate)lysine. 2 residues coordinate pyridoxal 5'-phosphate: arginine 256 and asparagine 291. Substrate contacts are provided by asparagine 291 and arginine 387.

It belongs to the class-I pyridoxal-phosphate-dependent aminotransferase family. LL-diaminopimelate aminotransferase subfamily. In terms of assembly, homodimer. Requires pyridoxal 5'-phosphate as cofactor.

It catalyses the reaction (2S,6S)-2,6-diaminopimelate + 2-oxoglutarate = (S)-2,3,4,5-tetrahydrodipicolinate + L-glutamate + H2O + H(+). The protein operates within amino-acid biosynthesis; L-lysine biosynthesis via DAP pathway; LL-2,6-diaminopimelate from (S)-tetrahydrodipicolinate (aminotransferase route): step 1/1. Functionally, involved in the synthesis of meso-diaminopimelate (m-DAP or DL-DAP), required for both lysine and peptidoglycan biosynthesis. Catalyzes the direct conversion of tetrahydrodipicolinate to LL-diaminopimelate. This chain is LL-diaminopimelate aminotransferase, found in Parabacteroides distasonis (strain ATCC 8503 / DSM 20701 / CIP 104284 / JCM 5825 / NCTC 11152).